The sequence spans 893 residues: Protein bride of sevenless (893 aa).

The signal sequence occupies residues 1-30 (MSGLQLIWKSPTQLVLFVLLITISCIDLCH). Residues 32-530 (VGAATPTKKS…RIKLDTWVAT (499 aa)) lie on the Extracellular side of the membrane. Disordered stretches follow at residues 36-66 (TPTK…NEGS) and 82-102 (GTAS…SSTT). The span at 50 to 66 (QPVSSTTTAIPTTNEGS) shows a compositional bias: polar residues. N-linked (GlcNAc...) asparagine glycans are attached at residues Asn183, Asn307, Asn328, Asn471, and Asn482. The next 8 membrane-spanning stretches (helical) occupy residues 531–551 (GLTA…FIVV), 563–583 (PVTS…FVPF), 607–627 (LCGV…SLLL), 630–650 (AVML…NGYI), 653–673 (IICV…LVVM), 692–712 (WGLL…VPFI), 722–742 (GILI…WIAL), and 752–772 (AAIP…ILIP). Over 773–893 (RTFLIVRGIE…SPDHSKITRF (121 aa)) the chain is Cytoplasmic. Residues 858 to 893 (ANINPQRPPPHPQQSPSRSSVCSLPPSPDHSKITRF) form a disordered region.

The protein belongs to the G-protein coupled receptor 3 family.

The protein resides in the cell membrane. In terms of biological role, acts as a ligand for sevenless tyrosine-kinase receptor during eye development. The chain is Protein bride of sevenless (boss) from Drosophila virilis (Fruit fly).